A 551-amino-acid polypeptide reads, in one-letter code: Thermolysin (551 aa).

Residues 1 to 31 (MKRKMKMKLVRFGLAAGLAAQVFFLPYNALA) form the signal peptide. Residues 32 to 235 (STEHVTWNQQ…DAAKPGDVKS (204 aa)) constitute a propeptide, activation peptide. D292, D294, Q296, and D373 together coordinate Ca(2+). H377 is a Zn(2+) binding site. The active site involves E378. Residues H381 and E401 each contribute to the Zn(2+) site. 8 residues coordinate Ca(2+): E412, N418, D420, E422, E425, T429, I432, and D435. The Proton donor role is filled by H466.

This sequence belongs to the peptidase M4 family. Ca(2+) is required as a cofactor. Zn(2+) serves as cofactor.

It localises to the secreted. The enzyme catalyses Preferential cleavage: Xaa-|-Leu &gt; Xaa-|-Phe.. Its function is as follows. Extracellular zinc metalloprotease. This Geobacillus stearothermophilus (Bacillus stearothermophilus) protein is Thermolysin (nprS).